We begin with the raw amino-acid sequence, 218 residues long: Glutathione S-transferase class-mu 26 kDa isozyme (218 aa).

Residues 2–83 (SPILGYWKIK…YIADKHNMLG (82 aa)) form the GST N-terminal domain. Glutathione-binding positions include 7–8 (YW), 41–45 (WRNKK), 54–55 (NL), and 67–68 (QS). The region spanning 85-203 (CPKERAEISM…KSSKYIAWPL (119 aa)) is the GST C-terminal domain. Y111 serves as a coordination point for substrate.

This sequence belongs to the GST superfamily. Mu family. In terms of assembly, homodimer.

It carries out the reaction RX + glutathione = an S-substituted glutathione + a halide anion + H(+). Conjugation of reduced glutathione to a wide number of exogenous and endogenous hydrophobic electrophiles. Its function is as follows. GST isoenzymes appear to play a central role in the parasite detoxification system. Other functions are also suspected including a role in increasing the solubility of haematin in the parasite gut. This chain is Glutathione S-transferase class-mu 26 kDa isozyme, found in Schistosoma japonicum (Blood fluke).